The primary structure comprises 432 residues: Tryptophan--tRNA ligase (432 aa).

ATP-binding positions include 13-15 and 21-22; these read TTS and GN. The 'HIGH' region motif lies at 14 to 22; it reads TSGTPHLGN. D146 contacts L-tryptophan. ATP is bound by residues 158–160, L198, and 205–209; these read GRD and KMSKS. The 'KMSKS' region signature appears at 205–209; sequence KMSKS.

The protein belongs to the class-I aminoacyl-tRNA synthetase family. As to quaternary structure, homodimer.

It localises to the cytoplasm. The enzyme catalyses tRNA(Trp) + L-tryptophan + ATP = L-tryptophyl-tRNA(Trp) + AMP + diphosphate + H(+). Functionally, catalyzes the attachment of tryptophan to tRNA(Trp). The protein is Tryptophan--tRNA ligase of Xanthomonas axonopodis pv. citri (strain 306).